Reading from the N-terminus, the 296-residue chain is Acetylglutamate kinase (296 aa).

Substrate contacts are provided by residues 69–70, arginine 91, and asparagine 193; that span reads GG.

This sequence belongs to the acetylglutamate kinase family. ArgB subfamily.

The protein resides in the cytoplasm. It carries out the reaction N-acetyl-L-glutamate + ATP = N-acetyl-L-glutamyl 5-phosphate + ADP. The protein operates within amino-acid biosynthesis; L-arginine biosynthesis; N(2)-acetyl-L-ornithine from L-glutamate: step 2/4. Functionally, catalyzes the ATP-dependent phosphorylation of N-acetyl-L-glutamate. The polypeptide is Acetylglutamate kinase (Albidiferax ferrireducens (strain ATCC BAA-621 / DSM 15236 / T118) (Rhodoferax ferrireducens)).